The primary structure comprises 124 residues: Insulin growth factor-like family member 4 (124 aa).

The N-terminal stretch at 1 to 19 (MVPRISAAIFIFELLGSNS) is a signal peptide. N-linked (GlcNAc...) asparagine glycosylation is found at N57 and N84.

The protein belongs to the IGFL family. Detected in the cerebellum.

The protein localises to the secreted. In Homo sapiens (Human), this protein is Insulin growth factor-like family member 4 (IGFL4).